We begin with the raw amino-acid sequence, 328 residues long: Opticin (328 aa).

The first 19 residues, 1-19 (MKFLAFLSLLSLVLQKAET), serve as a signal peptide directing secretion. Asn-46 carries an N-linked (GlcNAc...) asparagine glycan. Tyr-69 is modified (sulfotyrosine). 2 N-linked (GlcNAc...) asparagine glycosylation sites follow: Asn-80 and Asn-101. Residues 112–149 (LLNSQSSHGLPTCLVCVCLGSSVYCDDADLENIPPLPQ) enclose the LRRNT domain. LRR repeat units lie at residues 150-171 (MTTY…DFKG), 174-195 (KLRR…ALRL), 198-219 (ALQD…PSGI), 244-265 (KLQF…LPLS), 266-286 (LRSL…TFCD), and 296-316 (QLED…PEAY). A disulfide bridge links Cys-285 with Cys-318. A glycan (N-linked (GlcNAc...) asparagine) is linked at Asn-308.

This sequence belongs to the small leucine-rich proteoglycan (SLRP) family. SLRP class III subfamily. Homodimer. O-glycosylated. In terms of processing, sulfated on tyrosine residues. Post-translationally, proteolytically cleaved by MMP1, MMP2, MMP3, MMP7, MMP8, MMP9, ADAMTS4, and ADAMTS5. Proteolytically cleaved by MMP13. Expressed in cartilage (at protein level). Expressed in the vitreous collagen, inner limiting membrane, lens capsule, trabecular meshwork, anterior surface of the iris, the area adjacent to the nonpigmented ciliary epithelium, and weakly expressed in the retina of the eye (at protein level). Expressed in the nonpigmented ciliary epithelium of the eye.

It is found in the secreted. It localises to the extracellular space. The protein resides in the extracellular matrix. Functionally, inhibits angiogenesis in the vitreous humor of the eye, and therefore represses neovascularization. Binds collagen fibrils. May be involved in collagen fiber organization via regulation of other members of the small leucine-rich repeat proteoglycan superfamily. This chain is Opticin (Optc), found in Mus musculus (Mouse).